The following is a 114-amino-acid chain: Nucleoid-associated protein slr1847 (114 aa).

This sequence belongs to the YbaB/EbfC family. Homodimer.

The protein resides in the cytoplasm. It is found in the nucleoid. In terms of biological role, binds to DNA and alters its conformation. May be involved in regulation of gene expression, nucleoid organization and DNA protection. The chain is Nucleoid-associated protein slr1847 from Synechocystis sp. (strain ATCC 27184 / PCC 6803 / Kazusa).